Reading from the N-terminus, the 288-residue chain is Acetyl-coenzyme A carboxylase carboxyl transferase subunit beta (288 aa).

Positions 34–288 constitute a CoA carboxyltransferase N-terminal domain; sequence LFAKCPGCKQ…TLLSFHGGVQ (255 aa). The Zn(2+) site is built by Cys-38, Cys-41, Cys-56, and Cys-59. A C4-type zinc finger spans residues 38 to 59; it reads CPGCKQAIYQKDLGQAKICPNC.

This sequence belongs to the AccD/PCCB family. As to quaternary structure, acetyl-CoA carboxylase is a heterohexamer composed of biotin carboxyl carrier protein (AccB), biotin carboxylase (AccC) and two subunits each of ACCase subunit alpha (AccA) and ACCase subunit beta (AccD). It depends on Zn(2+) as a cofactor.

It localises to the cytoplasm. It catalyses the reaction N(6)-carboxybiotinyl-L-lysyl-[protein] + acetyl-CoA = N(6)-biotinyl-L-lysyl-[protein] + malonyl-CoA. The protein operates within lipid metabolism; malonyl-CoA biosynthesis; malonyl-CoA from acetyl-CoA: step 1/1. Its function is as follows. Component of the acetyl coenzyme A carboxylase (ACC) complex. Biotin carboxylase (BC) catalyzes the carboxylation of biotin on its carrier protein (BCCP) and then the CO(2) group is transferred by the transcarboxylase to acetyl-CoA to form malonyl-CoA. This Streptococcus thermophilus (strain ATCC BAA-491 / LMD-9) protein is Acetyl-coenzyme A carboxylase carboxyl transferase subunit beta.